The following is a 64-amino-acid chain: OPG024 protein (64 aa).

The tract at residues 1–64 is disordered; that stretch reads MSSKGGSSGG…GGVKSGTGKI (64 aa). Residues 23-34 are compositionally biased toward low complexity; that stretch reads NKGSKTYTSSGS. Positions 49–64 are enriched in gly residues; that stretch reads VNGGVNGGVKSGTGKI.

This sequence belongs to the orthopoxvirus OPG024 family.

The sequence is that of OPG024 protein (OPG023) from Cynomys gunnisoni (Gunnison's prairie dog).